Reading from the N-terminus, the 149-residue chain is 3-dehydroquinate dehydratase (149 aa).

The Proton acceptor role is filled by Tyr-24. Positions 75, 81, and 88 each coordinate substrate. Residue His-101 is the Proton donor of the active site. Residues 102–103 and Arg-112 each bind substrate; that span reads LS.

This sequence belongs to the type-II 3-dehydroquinase family. As to quaternary structure, homododecamer.

It catalyses the reaction 3-dehydroquinate = 3-dehydroshikimate + H2O. Its pathway is metabolic intermediate biosynthesis; chorismate biosynthesis; chorismate from D-erythrose 4-phosphate and phosphoenolpyruvate: step 3/7. Functionally, catalyzes a trans-dehydration via an enolate intermediate. The protein is 3-dehydroquinate dehydratase of Bartonella tribocorum (strain CIP 105476 / IBS 506).